The following is a 533-amino-acid chain: Protein mono-ADP-ribosyltransferase PARP3 (533 aa).

Residues 1–30 are disordered; that stretch reads MAPKRKASVQTEGSKKRRQGTEEEDSFRST. Lys-6 carries the N6-(ADP-ribosyl)lysine modification. Position 12 is an ADP-ribosyl glutamic acid (Glu-12). The short motif at 14-18 is the Nuclear localization signal element; the sequence is SKKRR. 2 positions are modified to ADP-ribosyl glutamic acid: Glu-24 and Glu-32. Residues 57-147 enclose the WGR domain; that stretch reads GIQVHEDYDC…DRFVAQPNKY (91 aa). At Asp-138 the chain carries ADP-ribosyl aspartic acid. Glu-160, Glu-230, Glu-309, and Glu-310 each carry ADP-ribosyl glutamic acid. Residues 181 to 299 form the PARP alpha-helical domain; it reads PCSLDPATQN…DIELAQTLQA (119 aa). Positions 313-533 constitute a PARP catalytic domain; it reads HPLDRDYQLL…RLRYLLEIHL (221 aa).

The protein belongs to the ARTD/PARP family. As to quaternary structure, interacts with PARP1; leading to activate PARP1 in absence of DNA. Interacts with PRKDC. Interacts with XRCC5/Ku80; the interaction is dependent on nucleic acids. Interacts with XRCC6/Ku70; the interaction is dependent on nucleic acids. Interacts with EZH2, HDAC1, HDAC2, SUZ12, YY1, LRIG3 and LIG4. Auto-ADP-ribosylated.

The protein localises to the nucleus. It is found in the chromosome. Its subcellular location is the cytoplasm. It localises to the cytoskeleton. The protein resides in the microtubule organizing center. The protein localises to the centrosome. It is found in the centriole. It catalyses the reaction L-aspartyl-[protein] + NAD(+) = 4-O-(ADP-D-ribosyl)-L-aspartyl-[protein] + nicotinamide. It carries out the reaction L-glutamyl-[protein] + NAD(+) = 5-O-(ADP-D-ribosyl)-L-glutamyl-[protein] + nicotinamide. The catalysed reaction is L-lysyl-[protein] + NAD(+) = N(6)-(ADP-D-ribosyl)-L-lysyl-[protein] + nicotinamide + H(+). Mono-ADP-ribosyltransferase that mediates mono-ADP-ribosylation of target proteins and plays a key role in the response to DNA damage. Mediates mono-ADP-ribosylation of glutamate, aspartate or lysine residues on target proteins. In contrast to PARP1 and PARP2, it is not able to mediate poly-ADP-ribosylation. Involved in DNA repair by mediating mono-ADP-ribosylation of a limited number of acceptor proteins involved in chromatin architecture and in DNA metabolism, such as histone H2B, XRCC5 and XRCC6. ADP-ribosylation follows DNA damage and appears as an obligatory step in a detection/signaling pathway leading to the reparation of DNA strand breaks. Involved in single-strand break repair by catalyzing mono-ADP-ribosylation of histone H2B on 'Glu-2' (H2BE2ADPr) of nucleosomes containing nicked DNA. Cooperates with the XRCC5-XRCC6 (Ku80-Ku70) heterodimer to limit end-resection thereby promoting accurate NHEJ. Suppresses G-quadruplex (G4) structures in response to DNA damage. Associates with a number of DNA repair factors and is involved in the response to exogenous and endogenous DNA strand breaks. Together with APLF, promotes the retention of the LIG4-XRCC4 complex on chromatin and accelerate DNA ligation during non-homologous end-joining (NHEJ). May link the DNA damage surveillance network to the mitotic fidelity checkpoint. Acts as a negative regulator of immunoglobulin class switch recombination, probably by controlling the level of AICDA /AID on the chromatin. In addition to proteins, also able to ADP-ribosylate DNA: mediates DNA mono-ADP-ribosylation of DNA strand break termini via covalent addition of a single ADP-ribose moiety to a 5'- or 3'-terminal phosphate residues in DNA containing multiple strand breaks. The sequence is that of Protein mono-ADP-ribosyltransferase PARP3 from Mus musculus (Mouse).